The primary structure comprises 135 residues: Transcription antitermination protein NusB (135 aa).

This sequence belongs to the NusB family.

Functionally, involved in transcription antitermination. Required for transcription of ribosomal RNA (rRNA) genes. Binds specifically to the boxA antiterminator sequence of the ribosomal RNA (rrn) operons. The polypeptide is Transcription antitermination protein NusB (Wolinella succinogenes (strain ATCC 29543 / DSM 1740 / CCUG 13145 / JCM 31913 / LMG 7466 / NCTC 11488 / FDC 602W) (Vibrio succinogenes)).